The following is a 7096-amino-acid chain: Replicase polyprotein 1ab (7096 aa).

Positions 1–147 are disordered; that stretch reads MESLVPGFNE…ADLKSFDLGD (147 aa). At 1–2225 the chain is on the cytoplasmic side; it reads MESLVPGFNE…NYLKSPNFSK (2225 aa). The CoV Nsp1 globular domain occupies 12–127; that stretch reads THVQLSLPVL…YRKVLLRKNG (116 aa). The BetaCoV Nsp1 C-terminal domain occupies 148 to 179; sequence ELGTDPYEDFQENWNTKHSSGVTRELMRELNG. A binding to 40s ribosome mRNA entry channel region spans residues 154–180; the sequence is YEDFQENWNTKHSSGVTRELMRELNGG. The CoV Nsp2 N-terminal domain maps to 183–456; that stretch reads TRYVDNNFCG…NDNLLEILQK (274 aa). C200, C231, H234, H236, C323, C326, C341, C344, C370, C373, H382, and C416 together coordinate Zn(2+). The tract at residues 200-236 is C2H2; sequence CIKDLLARAGKASCTLSEQLDFIDTKRGVYCCREHEH. Residues 323–344 are C4; sequence CDHCGETSWQTGDFVKATCEFC. A C2HC region spans residues 370–416; sequence CPACHNSEVGPEHSLAEYHNESGLKTILRKGGRTIAFGGCVFSYVGC. A CoV Nsp2 middle domain is found at 458–688; it reads KVNINIVGDF…FKLVNKFLAL (231 aa). 2 LRR repeats span residues 545-569 and 697-719; these read RSIF…AITI and GAKL…LYRK. The CoV Nsp2 C-terminal domain occupies 690–818; that stretch reads ADSIIIGGAK…TNNTFTLKGG (129 aa). The region spanning 821–929 is the Ubiquitin-like 1 domain; the sequence is TKVTFGDDTV…MYCSFYPPDE (109 aa). The interval 926-999 is disordered; it reads PPDEDEEEGD…QQDGSEDNQT (74 aa). Composition is skewed to acidic residues over residues 927–942 and 971–984; these read PDED…EEFE and PEEE…DDDS. Macro domains follow at residues 1025-1194, 1231-1359, and 1367-1494; these read VNSF…LEMK, KIKA…LPSI, and ILGT…TSSS. A DPUP domain is found at 1496–1561; that stretch reads TPEEHFIETI…TFDNLKTLLS (66 aa). The region spanning 1565 to 1620 is the Ubiquitin-like 2 domain; sequence VRTIKVFTTVDNINLHTQVVDMSMTYGQQFGPTYLDGADVTKIKPHNSHEGKTFYV. The region spanning 1634–1898 is the Peptidase C16 domain; the sequence is YYHTTDPSFL…CTEIDPKLDN (265 aa). The active-site For PL-PRO activity is the C1674. The stretch at 1680-1702 is one LRR 3 repeat; that stretch reads LLTLQQIELKFNPPALQDAYYRA. Zn(2+)-binding residues include C1752, C1755, C1787, and C1789. The segment at 1752–1789 adopts a C4-type zinc-finger fold; the sequence is CKTCGQQQTTLKGVEAVMYMGTLSYEQFKKGVQIPCTC. Residues H1835 and D1849 each act as for PL-PRO activity in the active site. The 111-residue stretch at 1911–2021 folds into the Nucleic acid-binding domain; sequence PIDLVPNQPY…CLWSTKPVET (111 aa). Residues 2046 to 2155 form the G2M domain; it reads PVSEEVVENP…LNKVVSTTTN (110 aa). The chain crosses the membrane as a helical span at residues 2226–2246; that stretch reads LINIIIWFLLLSVCLGSLIYS. The Lumenal segment spans residues 2247-2317; that stretch reads TAALGVLMSN…QITISSFKWD (71 aa). One can recognise a 3Ecto domain in the interval 2247–2317; the sequence is TAALGVLMSN…QITISSFKWD (71 aa). Disulfide bonds link C2263–C2291 and C2282–C2288. A helical transmembrane segment spans residues 2318–2338; sequence LTAFGLVAEWFLAYILFTRFF. The Cytoplasmic portion of the chain corresponds to 2339–2775; the sequence is YVLGLAAIMQ…VNNWLKQLIK (437 aa). Residues 2395-2485 are Y1; it reads KSYVHVVDGC…QFKRPINPTD (91 aa). Residues 2395–2763 form the CoV Nsp3 Y domain; it reads KSYVHVVDGC…VTTKIALKGG (369 aa). Zn(2+) contacts are provided by H2399, C2404, C2409, C2412, C2445, H2448, C2452, and C2455. A ZF1 region spans residues 2399-2412; the sequence is HVVDGCNSSTCMMC. A ZF2 region spans residues 2445–2455; the sequence is CKLHNWNCVNC. The tract at residues 2486–2580 is Y2; it reads QSSYIVDSVT…LLDQALVSDV (95 aa). Residues 2486 to 2763 form a coV-Y region; it reads QSSYIVDSVT…VTTKIALKGG (278 aa). The Y3 stretch occupies residues 2581-2662; sequence GDSAEVAVKM…ECLKLSHQSD (82 aa). Positions 2663–2763 are Y4; sequence IEVTGDSCNN…VTTKIALKGG (101 aa). The chain crosses the membrane as a helical span at residues 2776-2796; that stretch reads VTLVFLFVAAIFYLITPVHVM. The Lumenal segment spans residues 2797–3044; it reads SKHTDFSSEI…IQPIGALDIS (248 aa). Residues 3045 to 3065 traverse the membrane as a helical segment; that stretch reads ASIVAGGIVAIVVTCLAYYFM. Residues 3066–3099 lie on the Cytoplasmic side of the membrane; that stretch reads RFRRAFGEYSHVVAFNTLLFLMSFTVLCLTPVYS. The helical transmembrane segment at 3100–3120 threads the bilayer; that stretch reads FLPGVYSVIYLYLTFYLTNDV. Over 3121–3127 the chain is Lumenal; it reads SFLAHIQ. The chain crosses the membrane as a helical span at residues 3128–3148; that stretch reads WMVMFTPLVPFWITIAYIICI. The Cytoplasmic segment spans residues 3149-3586; it reads STKHFYWFFS…KGTHHWLLLT (438 aa). The Nsp4C domain occupies 3165 to 3263; the sequence is VVFNGVSFST…QTSITSAVLQ (99 aa). One copy of the LRR 4 repeat lies at 3185–3206; the sequence is LNKEMYLKLRSDVLLPLTQYNR. Positions 3264-3569 constitute a Peptidase C30 domain; it reads SGFRKMAFPS…VRQCSGVTFQ (306 aa). A Glycyl lysine isopeptide (Lys-Gly) (interchain with G-Cter in ubiquitin) cross-link involves residue K3268. H3304 acts as the For 3CL-PRO activity in catalysis. K3353 is covalently cross-linked (Glycyl lysine isopeptide (Lys-Gly) (interchain with G-Cter in ubiquitin)). C3408 (nucleophile; for 3CL-PRO activity) is an active-site residue. Residues 3587-3607 traverse the membrane as a helical segment; the sequence is ILTSLLVLVQSTQWSLFFFLY. Position 3608 (E3608) is a topological domain, lumenal. A helical membrane pass occupies residues 3609 to 3629; sequence NAFLPFAMGIIAMSAFAMMFV. Over 3630-3634 the chain is Cytoplasmic; the sequence is KHKHA. Residues 3635–3655 form a helical membrane-spanning segment; the sequence is FLCLFLLPSLATVAYFNMVYM. Topologically, residues 3656–3673 are lumenal; it reads PASWVMRIMTWLDMVDTS. A helical membrane pass occupies residues 3674 to 3694; that stretch reads LSGFKLKDCVMYASAVVLLIL. Residues 3695 to 3729 are Cytoplasmic-facing; the sequence is MTARTVYDDGARRVWTLMNVLTLVYKVYYGNALDQ. The chain crosses the membrane as a helical span at residues 3730-3750; sequence AISMWALIISVTSNYSGVVTT. The Lumenal portion of the chain corresponds to 3751 to 3778; that stretch reads VMFLARGIVFMCVEYCPIFFITGNTLQC. A helical transmembrane segment spans residues 3779–3799; sequence IMLVYCFLGYFCTCYFGLFCL. Residues 3800–7096 are Cytoplasmic-facing; that stretch reads LNRYFRLTLG…VISSDVLVNN (3297 aa). The region spanning 3860–3942 is the RdRp Nsp7 cofactor domain; it reads SKMSDVKCTS…EMLDNRATLQ (83 aa). Residues 3931–4020 form a disordered region; sequence CEEMLDNRAT…QMYKQARSED (90 aa). LRR repeat units follow at residues 3935-3959 and 3977-4004; these read LDNR…AFAT and LKKL…LEKM. The 198-residue stretch at 3943–4140 folds into the RdRp Nsp8 cofactor domain; that stretch reads AIASEFSSLP…LRANSAVKLQ (198 aa). The Nsp9 ssRNA-binding domain occupies 4141–4253; it reads NNELSPVALR…GSLAATVRLQ (113 aa). The region spanning 4254-4392 is the ExoN/MTase coactivator domain; that stretch reads AGNATEVPAN…CDQLREPMLQ (139 aa). C4327, C4330, H4336, C4343, C4370, C4373, C4381, and C4383 together coordinate Zn(2+). Residues 4399 to 4653 form the NiRAN domain; sequence FLNRVCGVSA…TAESHVDTDL (255 aa). An LRR 7 repeat occupies 4591 to 4616; it reads AGIVGVLTLDNQDLNGNWYDFGDFIQ. 2 residues coordinate Mn(2+): N4601 and D4610. Residues 4658–4756 enclose the Nsp12 Interface domain; that stretch reads IKWDLLKYDF…HNQDVNLHSS (99 aa). 5 residues coordinate Zn(2+): H4687, C4693, C4698, C4702, and C4879. Residues 4757–5324 form the Nsp12 RNA-dependent RNA polymerase domain; sequence RLSFKELLVY…AMYTPHTVLQ (568 aa). The tract at residues 4759 to 4973 is rdRp Fingers N-ter; that stretch reads SFKELLVYAA…HQKLLKSIAA (215 aa). Residues 4937-4947 are interaction with RMP Remdesivir; that stretch reads KYAISAKNRAR. The interval 4974-5012 is rdRp Palm N-ter; that stretch reads TRGATVVIGTSKFYGGWHNMLKTVYSDVENPHLMGWDYP. In terms of domain architecture, RdRp catalytic spans 5004-5166; sequence PHLMGWDYPK…CFNSTYASQG (163 aa). Positions 5013-5071 are rdRp Fingers C-ter; sequence KCDRAMPNMLRIMASLVLARKHTTCCSLSHRFYRLANECAQVLSEMVMCGGSLYVKPGG. Positions 5034, 5037, and 5038 each coordinate Zn(2+). Residues 5072–5207 form a rdRp Palm C-ter region; the sequence is TSSGDATTAY…TKGPHEFCSQ (136 aa). Catalysis depends on residues S5151, D5152, and D5153. Residues 5208–5324 are rdRp Thumb; the sequence is HTMLVKQGDD…AMYTPHTVLQ (117 aa). The 113-residue stretch at 5325 to 5437 folds into the CV ZBD domain; sequence AVGACVLCNS…TDFNAIATCD (113 aa). Residues C5329, C5332, C5340, C5343, C5350, C5353, H5357, H5363, C5374, C5379, C5396, and H5399 each coordinate Zn(2+). The LRR 8 repeat unit spans residues 5552–5572; it reads TSHTVMPLSAPTLVPQEHYVR. The 182-residue stretch at 5581–5762 folds into the (+)RNA virus helicase ATP-binding domain; sequence NISDEFSSNV…MKTIGPDMFL (182 aa). 5606–5613 contributes to the a ribonucleoside 5'-triphosphate binding site; it reads GPPGTGKS. One can recognise a (+)RNA virus helicase C-terminal domain in the interval 5763–5932; the sequence is GTCRRCPAEI…TLQAENVTGL (170 aa). An ExoN domain is found at 5997 to 6212; the sequence is MFITREEAIR…RCLAVHECFV (216 aa). Residues D6015, E6017, and E6116 contribute to the active site. Mg(2+) is bound by residues D6015, E6017, and E6116. Positions 6132, 6135, 6151, 6154, 6182, 6186, and 6189 each coordinate Zn(2+). Catalysis depends on residues H6193 and D6198. Positions 6193 and 6198 each coordinate Mg(2+). C6204 is a binding site for Zn(2+). The N7-MTase domain maps to 6221–6452; it reads YPIIGDELKI…NLWNTFTRLQ (232 aa). 6256 to 6262 provides a ligand contact to S-adenosyl-L-methionine; sequence DIGNPKA. Positions 6339 to 6353 are gpppA-binding; the sequence is CDGGSLYVNKHAFHT. Zn(2+) contacts are provided by C6377, C6402, C6409, and H6412. Positions 6453-6513 constitute a Nsp15 N-terminal oligomerization domain; the sequence is SLENVAFNVV…NVAFELWAKR (61 aa). The 126-residue stretch at 6514–6639 folds into the AV-Nsp11N/CoV-Nsp15M domain; that stretch reads NIKPVPEVKI…YYKKVDGVVQ (126 aa). Residues 6656 to 6795 enclose the NendoU domain; it reads KPRSQMEIDF…KDGHVETFYP (140 aa). Residue H6686 is the Proton donor; for uridylate-specific endoribonuclease nsp15 activity of the active site. The active-site Proton acceptor; for uridylate-specific endoribonuclease nsp15 activity is H6701. Residue K6741 is the For uridylate-specific endoribonuclease nsp15 activity of the active site. Residues 6741–6745 and 6792–6796 contribute to the uracil site; these read KCVCS and TFYPK. The 295-residue stretch at 6800–7094 folds into the Nidovirus-type SAM-dependent 2'-O-MTase domain; that stretch reads SQAWQPGVAM…RVVISSDVLV (295 aa). The LRR 9 repeat unit spans residues 6817–6841; that stretch reads RMLLEKCDLQNYGDSATLPKGIMMN. Catalysis depends on residues K6844, D6928, K6968, and E7001.

The protein belongs to the coronaviruses polyprotein 1ab family. In terms of assembly, interacts with host GIGYF2. May form homohexamers. Interacts with N protein. As to quaternary structure, 3CL-PRO exists as monomer and homodimer. Only the homodimer shows catalytic activity. Interacts with host FBXO22; this interaction promotes the proteasomal degradation of nsp5. In terms of assembly, interacts with PL-PRO and nsp6. Forms homodimers. Interacts with host ZFYVE1 (DFCP1), which leads to ER and DMVs binding to lipid droplets. Interacts with host TBK1; this interaction decreases IRF3 phosphorylation by 57%, which leads to reduced IFN-beta production. As to quaternary structure, interacts with nsp8 and nsp12 to form the replication-transcription complex (RTC): nsp12, nsp7, two subunits of nsp8, and up to two subunits of nsp13. Eight copies of nsp7 and eight copies of nsp8 assemble to form a heterohexadecamer dsRNA-encircling ring structure. In terms of assembly, interacts with nsp7, nsp13 and nsp12 to form the replication-transcription complex (RTC): nsp12, nsp7, two subunits of nsp8, and up to two subunits of nsp13. Eight copies of nsp7 and eight copies of nsp8 assemble to form a heterohexadecamer dsRNA-encircling ring structure. Is a dimer. Interacts with NSP12. Interacts with host SND1. As to quaternary structure, forms a dodecamer and interacts with nsp14 and nsp16; these interactions enhance nsp14 and nsp16 enzymatic activities. In terms of assembly, interacts with nsp7 and nsp8 to form the replication-transcription complex (RTC): nsp12, nsp7, two subunits of nsp8, and up to two subunits of nsp13. Interacts with nsp9. Interacts with nsp8 to form the replication-transcription complex (RTC): nsp12, nsp7, two subunits of nsp8, and up to two subunits of nsp13. Interacts with host TBK1; this interaction inhibits TBK1 phosphorylation and decreases by 75% IRF3 phosphorylation, which leads to reduced IFN-beta production. As to quaternary structure, interacts (via N-terminus) with DDX1. Interacts with nsp10. In terms of assembly, homohexamer. Interacts with nsp10. The cofactor is Mn(2+). Requires Mg(2+) as cofactor. In terms of processing, specific enzymatic cleavages in vivo by its own proteases yield mature proteins. 3CL-PRO and PL-PRO proteinases are autocatalytically processed.

The protein resides in the host cytoplasm. It is found in the host endosome. It localises to the host endoplasmic reticulum membrane. Its subcellular location is the host Golgi apparatus. The protein localises to the host nucleus. The protein resides in the host perinuclear region. It is found in the host endoplasmic reticulum. It localises to the host endoplasmic reticulum-Golgi intermediate compartment. It catalyses the reaction RNA(n) + a ribonucleoside 5'-triphosphate = RNA(n+1) + diphosphate. The enzyme catalyses ATP + H2O = ADP + phosphate + H(+). The catalysed reaction is TSAVLQ-|-SGFRK-NH2 and SGVTFQ-|-GKFKK the two peptides corresponding to the two self-cleavage sites of the SARS 3C-like proteinase are the two most reactive peptide substrates. The enzyme exhibits a strong preference for substrates containing Gln at P1 position and Leu at P2 position.. It carries out the reaction Thiol-dependent hydrolysis of ester, thioester, amide, peptide and isopeptide bonds formed by the C-terminal Gly of ubiquitin (a 76-residue protein attached to proteins as an intracellular targeting signal).. It catalyses the reaction a 5'-end (N(7)-methyl 5'-triphosphoguanosine)-ribonucleoside in mRNA + S-adenosyl-L-methionine = a 5'-end (N(7)-methyl 5'-triphosphoguanosine)-(2'-O-methyl-ribonucleoside) in mRNA + S-adenosyl-L-homocysteine + H(+). The enzyme catalyses uridylyl-uridylyl-ribonucleotide-RNA = a 3'-end uridylyl-2',3'-cyclophospho-uridine-RNA + a 5'-end dephospho-ribonucleoside-RNA. The catalysed reaction is a 5'-end diphospho-ribonucleoside in mRNA + GTP + H(+) = a 5'-end (5'-triphosphoguanosine)-ribonucleoside in mRNA + diphosphate. It carries out the reaction a 5'-end (5'-triphosphoguanosine)-ribonucleoside in mRNA + S-adenosyl-L-methionine = a 5'-end (N(7)-methyl 5'-triphosphoguanosine)-ribonucleoside in mRNA + S-adenosyl-L-homocysteine. Inhibited in vitro by GRL-0617. With respect to regulation, inhibited ex vivo by K22. It may shift NSP6 zippering activity towards the nuclear envelope, thereby impairing formation of the NSP6-compartment necessary for viral transcription/replication. Its activity is regulated as follows. Inhibited by Remdesivir antiviral drug (GS-5734). Inhibited by Remdesivir antiviral drug (GS-5734) through non-obligate RNA chain termination. With respect to regulation, inhibited by pyridone-containing alpha-ketoamides compounds 13a and 13b. In turn, alpha-ketoamide 13b (tert-butyl (1-((S)-1-(((S)-4-(benzylamino)-3,4-dioxo-1-((S)-2-oxopyrrolidin-3-yl)butan-2-yl)amino)-3-cyclopropyl-1-oxopropan-2-yl)-2-oxo-1,2-dihydropyridin-3-yl)carbamate) inhibits SARS-CoV-2 replication in human lung cells. Inhibited ex vivo by michael acceptor inhibitor N3. Inhibited ex vivo by compound 11a and 11b. Functionally, multifunctional protein involved in the transcription and replication of viral RNAs. Contains the proteinases responsible for the cleavages of the polyprotein. Inhibits host translation by associating with the open head conformation of the 40S subunit. The C-terminus binds to and obstructs ribosomal mRNA entry tunnel. Thereby inhibits antiviral response triggered by innate immunity or interferons. The nsp1-40S ribosome complex further induces an endonucleolytic cleavage near the 5'UTR of host mRNAs, targeting them for degradation. This inhibits the integrated stress response (ISR) in the infected cell by preventing EIF2S1/eIF2-alpha phosphorylation upstream of stress granule formation and depletes host G3BP1. Viral mRNAs less susceptible to nsp1-mediated inhibition of translation, because of their 5'-end leader sequence. In terms of biological role, enhances mRNA repression of the 4EHP-GYF2 complex in the host, thereby inhibiting the antiviral response and facilitating SARS-CoV-2 replication. Possibly acts in cooperation with nsp1, which induces ribosome stalling on host mRNA, triggering mRNA repression by the host 4EHP-GYF2 complex which is enhanced by nsp2. Its function is as follows. Responsible for the cleavages located at the N-terminus of the replicase polyprotein. Participates together with nsp4 in the assembly of virally-induced cytoplasmic double-membrane vesicles necessary for viral replication. Antagonizes innate immune induction of type I interferon by blocking the phosphorylation, dimerization and subsequent nuclear translocation of host IRF3. Also prevents host NF-kappa-B signaling. In addition, PL-PRO possesses a deubiquitinating/deISGylating activity and processes both 'Lys-48'- and 'Lys-63'-linked polyubiquitin chains from cellular substrates. Cleaves preferentially ISG15 from antiviral protein IFIH1 (MDA5), but not RIGI. Can play a role in host ADP-ribosylation by ADP-ribose. Plays a role in the formation and maintenance of double membrane vesicles (DMVs) replication organelles. DMVs are formed by nsp3 and nsp4, while nsp6 zippers ER membranes and connects to lipid droplets. Functionally, plays a role in the formation and maintenance of double membrane vesicles (DMVs) replication organelles. DMVs are formed by nsp3 and nsp4, while nsp6 zippers ER membranes and connects to lipid droplets. Cleaves the C-terminus of replicase polyprotein at 11 sites. Recognizes substrates containing the core sequence [ILMVF]-Q-|-[SGACN]. Cleaves and inactivates human TRMT1, preventing tRNA guanine(26)-dimethylation of tRNAs. May cleave human NLRP1 in lung epithelial cells, thereby activating the NLRP1 inflammasome pathway. May cleave human GSDMD, triggering alternative GSDME-mediated epithelial cell death upon activation of the NLRP1 inflammasome, which may enhance the release interleukins 1B, 6, 16 and 18. Also able to bind an ADP-ribose-1''-phosphate (ADRP). In terms of biological role, plays a role in the formation and maintenance of double membrane vesicles (DMVs) replication organelles. DMVs are formed by nsp3 and nsp4, while nsp6 zippers ER membranes and connects to lipid droplets. LDs are consumed during DMV formation. Binds to host TBK1 without affecting TBK1 phosphorylation; the interaction with TBK1 decreases IRF3 phosphorylation, which leads to reduced IFN-beta production. Its function is as follows. Plays a role in viral RNA synthesis. Forms a hexadecamer with nsp8 (8 subunits of each) that may participate in viral replication by acting as a primase. Alternatively, may synthesize substantially longer products than oligonucleotide primers. Functionally, plays a role in viral RNA synthesis. Forms a hexadecamer with nsp7 (8 subunits of each) that may participate in viral replication by acting as a primase. Alternatively, may synthesize substantially longer products than oligonucleotide primers. Interacts with ribosome signal recognition particle RNA (SRP). Together with NSP9, suppress protein integration into the cell membrane, thereby disrupting host immune defenses. Forms a primer, NSP9-pU, which is utilized by the polymerase for the initiation of RNA chains. Interacts with ribosome signal recognition particle RNA (SRP). Together with NSP8, suppress protein integration into the cell membrane, thereby disrupting host immune defenses. In terms of biological role, plays a pivotal role in viral transcription by stimulating both nsp14 3'-5' exoribonuclease and nsp16 2'-O-methyltransferase activities. Therefore plays an essential role in viral mRNAs cap methylation. Its function is as follows. RNA-directed RNA polymerase that catalyzes the transcription of viral genomic and subgenomic RNAs. Acts in complex with nsp7 and nsp8 to transcribe both the minus and positive strands of genomic RNA. The kinase-like NiRAN domain of NSP12 attaches one or more nucleotides to the amino terminus of NSP9, forming a covalent RNA-protein intermediate that serves as transcription/replication primer. Subgenomic RNAs (sgRNAs) are formed by discontinuous transcription: The polymerase has the ability to pause at transcription-regulating sequences (TRS) and jump to the leader TRS, resulting in a major deletion. This creates a series of subgenomic RNAs that are replicated, transcribed and translated. In addition, Nsp12 is a subunit of the viral RNA capping enzyme that catalyzes the RNA guanylyltransferase reaction for genomic and sub-genomic RNAs. Subsequently, the NiRAN domain transfers RNA to GDP, and forms the core cap structure GpppA-RNA. Functionally, plays a role in viral RNA synthesis. Multi-functional protein with a zinc-binding domain in N-terminus displaying RNA and DNA duplex-unwinding activities with 5' to 3' polarity. Activity of helicase is dependent on magnesium. Binds to host TBK1 and inhibits TBK1 phosphorylation; the interaction with TBK1 decreases IRF3 phosphorylation, which leads to reduced IFN-beta production. Plays a role in viral RNA synthesis through two distinct activities. The N7-guanine methyltransferase activity plays a role in the formation of the cap structure GpppA-RNA. The proofreading exoribonuclease reduces the sensitivity of the virus to RNA mutagens during replication. This activity acts on both ssRNA and dsRNA in a 3'-5' direction. In terms of biological role, plays a role in viral transcription/replication and prevents the simultaneous activation of host cell dsRNA sensors, such as MDA5/IFIH1, OAS, and PKR. Acts by degrading the 5'-polyuridines generated during replication of the poly(A) region of viral genomic and subgenomic RNAs. Catalyzes a two-step reaction in which a 2'3'-cyclic phosphate (2'3'-cP) is first generated by 2'-O transesterification, which is then hydrolyzed to a 3'-phosphate (3'-P). If not degraded, poly(U) RNA would hybridize with poly(A) RNA tails and activate host dsRNA sensors. May bind genomic dsRNA in association with the replication-transcription complex (RTC), and play a role in nsp12 discontinous transcription. Its function is as follows. Methyltransferase that mediates mRNA cap 2'-O-ribose methylation to the 5'-cap structure of viral mRNAs. N7-methyl guanosine cap is a prerequisite for binding of nsp16. Therefore, it plays an essential role in cap methylation of viral mRNAs, which is essential to evade the immune system, especially when restricted by human IFIT1 and IFIT3. May disrupt host mRNA splicing in nucleus by interacting with pre-mRNA Recognition Domains of the U1 and U2 snRNAs. The polypeptide is Replicase polyprotein 1ab (rep) (Homo sapiens (Human)).